The sequence spans 306 residues: Aspartate carbamoyltransferase catalytic subunit (306 aa).

Carbamoyl phosphate-binding residues include Arg-55 and Thr-56. Lys-84 serves as a coordination point for L-aspartate. Carbamoyl phosphate-binding residues include Arg-105, His-133, and Gln-136. L-aspartate contacts are provided by Arg-166 and Arg-227. Residues Leu-265 and Pro-266 each contribute to the carbamoyl phosphate site.

It belongs to the aspartate/ornithine carbamoyltransferase superfamily. ATCase family. Heterododecamer (2C3:3R2) of six catalytic PyrB chains organized as two trimers (C3), and six regulatory PyrI chains organized as three dimers (R2).

The enzyme catalyses carbamoyl phosphate + L-aspartate = N-carbamoyl-L-aspartate + phosphate + H(+). The protein operates within pyrimidine metabolism; UMP biosynthesis via de novo pathway; (S)-dihydroorotate from bicarbonate: step 2/3. Its function is as follows. Catalyzes the condensation of carbamoyl phosphate and aspartate to form carbamoyl aspartate and inorganic phosphate, the committed step in the de novo pyrimidine nucleotide biosynthesis pathway. This Neisseria gonorrhoeae (strain ATCC 700825 / FA 1090) protein is Aspartate carbamoyltransferase catalytic subunit.